Consider the following 50-residue polypeptide: MKTGFWQQVLPKRAGRRKEHPVQYMPHKKEENATGLMNPSLHTSHSAILK.

The tract at residues 1-50 (MKTGFWQQVLPKRAGRRKEHPVQYMPHKKEENATGLMNPSLHTSHSAILK) is disordered. Positions 35–50 (GLMNPSLHTSHSAILK) are enriched in polar residues.

This is an uncharacterized protein from Treponema pallidum (strain Nichols).